We begin with the raw amino-acid sequence, 510 residues long: Probable cytosol aminopeptidase (510 aa).

Residues Lys-254 and Asp-259 each coordinate Mn(2+). The active site involves Lys-266. Mn(2+) is bound by residues Asp-277, Asp-336, and Glu-338. The active site involves Arg-340. The interval 487–510 is disordered; the sequence is AQPVKASPKTRPARKSTPAAKTRA.

Belongs to the peptidase M17 family. The cofactor is Mn(2+).

The protein resides in the cytoplasm. The enzyme catalyses Release of an N-terminal amino acid, Xaa-|-Yaa-, in which Xaa is preferably Leu, but may be other amino acids including Pro although not Arg or Lys, and Yaa may be Pro. Amino acid amides and methyl esters are also readily hydrolyzed, but rates on arylamides are exceedingly low.. It carries out the reaction Release of an N-terminal amino acid, preferentially leucine, but not glutamic or aspartic acids.. In terms of biological role, presumably involved in the processing and regular turnover of intracellular proteins. Catalyzes the removal of unsubstituted N-terminal amino acids from various peptides. The chain is Probable cytosol aminopeptidase from Polaromonas naphthalenivorans (strain CJ2).